A 591-amino-acid polypeptide reads, in one-letter code: BRCA1-associated protein (591 aa).

The residue at position 52 (S52) is a Phosphoserine. A compositionally biased stretch (basic and acidic residues) spans 82–93 (DEVRDTVEEKKP). The segment at 82–124 (DEVRDTVEEKKPSAAPVSAQRSREQSESVNTAPESPSKQLPDQ) is disordered. Polar residues predominate over residues 108 to 124 (ESVNTAPESPSKQLPDQ). Phosphoserine occurs at positions 116 and 118. Residues 263–303 (CTVCLERMDESVNGILTTLCNHSFHSQCLQRWDDTTCPVCR) form an RING-type zinc finger. A UBP-type; degenerate zinc finger spans residues 300–392 (PVCRYCQTPE…GKIVQYECEG (93 aa)). Residues C316, C319, C328, C331, C336, H343, H347, and H353 each coordinate Zn(2+). Positions 430–536 (EKDTAEEINN…EIQEQLRDVM (107 aa)) form a coiled coil. The segment at 563–591 (IAMASAPNPPSSGAGGKLQSRKGRSKRGK) is disordered. Residues 581–591 (QSRKGRSKRGK) show a composition bias toward basic residues.

Interacts with the nuclear localization signal of BRCA1 and with the N-terminal of KSR1. The C-terminal portion of BRCA1 interacts with DDB1. In terms of tissue distribution, isoform 2 is highly expressed in testis, lower levels in brain, heart, lung, stomach, colon, uterus, liver and kidney. Isoform 1 is only expressed in the testis. Isoform 2 is predominant over isoform 1 in both fetal and adult testis.

It localises to the cytoplasm. The catalysed reaction is S-ubiquitinyl-[E2 ubiquitin-conjugating enzyme]-L-cysteine + [acceptor protein]-L-lysine = [E2 ubiquitin-conjugating enzyme]-L-cysteine + N(6)-ubiquitinyl-[acceptor protein]-L-lysine.. It participates in protein modification; protein ubiquitination. In terms of biological role, negatively regulates MAP kinase activation by limiting the formation of Raf/MEK complexes probably by inactivation of the KSR1 scaffold protein. Also acts as a Ras responsive E3 ubiquitin ligase that, on activation of Ras, is modified by auto-polyubiquitination resulting in the release of inhibition of Raf/MEK complex formation. May also act as a cytoplasmic retention protein with a role in regulating nuclear transport. The chain is BRCA1-associated protein from Mus musculus (Mouse).